The following is a 351-amino-acid chain: Nuclear inhibitor of protein phosphatase 1 (351 aa).

The segment at 1 to 142 (MAAAANSGSS…LPSAVKGDEK (142 aa)) is interaction with CDC5L, SF3B1 and MELK. The 53-residue stretch at 49-101 (YLFGRNPDLCDFTIDHQSCSRVHAALVYHKHLKRVFLIDLNSTHGTFLGHIRL) folds into the FHA domain. The interaction with EED stretch occupies residues 143 to 224 (MGGEDDELKG…VDPSVGRFRN (82 aa)). The residue at position 161 (T161) is a Phosphothreonine. A phosphoserine mark is found at S178 and S199. Short sequence motifs (nuclear localization signal) lie at residues 185 to 209 (GNLDIQRPKRKRKNSRVTFSEDDEI) and 210 to 240 (INPEDVDPSVGRFRNMVQTAVVPVKKKRVEG). Residues 191 to 200 (RPKRKRKNSR) form an involved in PP-1 inhibition region. An involved in PP-1 binding region spans residues 200–203 (RVTF). S204 carries the post-translational modification Phosphoserine. Phosphoserine is present on S249. Y264 is subject to Phosphotyrosine; by LYN; in vitro. An interaction with EED region spans residues 310–329 (AVNMNPAPNPAVYNPEAVNE). The tract at residues 316–351 (APNPAVYNPEAVNEPKKKKYAKEAWPGKKPTPSLLI) is disordered. The segment at 330–351 (PKKKKYAKEAWPGKKPTPSLLI) is RNA-binding. Residues 331–337 (KKKKYAK) form an involved in PP-1 inhibition region. Y335 carries the phosphotyrosine modification.

As to quaternary structure, interacts with phosphorylated CDC5L, SF3B1 and MELK. Interacts with EED, in a nucleic acid-stimulated manner. Part of a complex consisting of PPP1R8, EED, HDAC2 and PP-1. Part of the spliceosome. Interacts with PPP1CA, PPP1CB and PPP1CC. It depends on Mg(2+) as a cofactor. Post-translationally, may be inactivated by phosphorylation on Ser-199 or Ser-204. Phosphorylated by Lyn in vitro on Tyr-264, and also on Tyr-335 in the presence of RNA. Ubiquitously expressed, with highest levels in heart and skeletal muscle, followed by brain, placenta, lung, liver and pancreas. Less abundant in kidney. The concentration and ratio between isoforms is cell-type dependent. Isoform Alpha (&gt;90%) and isoform Beta were found in brain, heart and kidney. Isoform Gamma is mainly found in B-cells and T-lymphocytes, and has been found in 293 embryonic kidney cells.

The protein localises to the nucleus. It is found in the nucleus speckle. It localises to the cytoplasm. Functionally, inhibitor subunit of the major nuclear protein phosphatase-1 (PP-1). It has RNA-binding activity but does not cleave RNA and may target PP-1 to RNA-associated substrates. May also be involved in pre-mRNA splicing. Binds DNA and might act as a transcriptional repressor. Seems to be required for cell proliferation. In terms of biological role, isoform Gamma is a site-specific single-strand endoribonuclease that cleaves single strand RNA 3' to purines and pyrimidines in A+U-rich regions. It generates 5'-phosphate termini at the site of cleavage. This isoform does not inhibit PP-1. May be implicated in mRNA splicing. This chain is Nuclear inhibitor of protein phosphatase 1 (PPP1R8), found in Homo sapiens (Human).